Consider the following 476-residue polypeptide: Eukaryotic translation initiation factor 3 subunit L (476 aa).

The 196-residue stretch at 257–452 (DAIRMFSHIL…DLDYALENDL (196 aa)) folds into the PCI domain.

It belongs to the eIF-3 subunit L family. In terms of assembly, component of the eukaryotic translation initiation factor 3 (eIF-3) complex.

Its subcellular location is the cytoplasm. In terms of biological role, component of the eukaryotic translation initiation factor 3 (eIF-3) complex, which is involved in protein synthesis of a specialized repertoire of mRNAs and, together with other initiation factors, stimulates binding of mRNA and methionyl-tRNAi to the 40S ribosome. The eIF-3 complex specifically targets and initiates translation of a subset of mRNAs involved in cell proliferation. The chain is Eukaryotic translation initiation factor 3 subunit L from Aspergillus clavatus (strain ATCC 1007 / CBS 513.65 / DSM 816 / NCTC 3887 / NRRL 1 / QM 1276 / 107).